The primary structure comprises 239 residues: Pyridoxine 5'-phosphate synthase (239 aa).

Asparagine 7 contacts 3-amino-2-oxopropyl phosphate. 1-deoxy-D-xylulose 5-phosphate is bound at residue 9 to 10; it reads DH. Arginine 18 lines the 3-amino-2-oxopropyl phosphate pocket. Catalysis depends on histidine 43, which acts as the Proton acceptor. 1-deoxy-D-xylulose 5-phosphate contacts are provided by arginine 45 and histidine 50. The Proton acceptor role is filled by glutamate 70. Threonine 100 contributes to the 1-deoxy-D-xylulose 5-phosphate binding site. The Proton donor role is filled by histidine 191. Residues glycine 192 and 213–214 contribute to the 3-amino-2-oxopropyl phosphate site; that span reads GH.

Belongs to the PNP synthase family. Homooctamer; tetramer of dimers.

It localises to the cytoplasm. The catalysed reaction is 3-amino-2-oxopropyl phosphate + 1-deoxy-D-xylulose 5-phosphate = pyridoxine 5'-phosphate + phosphate + 2 H2O + H(+). Its pathway is cofactor biosynthesis; pyridoxine 5'-phosphate biosynthesis; pyridoxine 5'-phosphate from D-erythrose 4-phosphate: step 5/5. Functionally, catalyzes the complicated ring closure reaction between the two acyclic compounds 1-deoxy-D-xylulose-5-phosphate (DXP) and 3-amino-2-oxopropyl phosphate (1-amino-acetone-3-phosphate or AAP) to form pyridoxine 5'-phosphate (PNP) and inorganic phosphate. The sequence is that of Pyridoxine 5'-phosphate synthase from Synechococcus sp. (strain JA-2-3B'a(2-13)) (Cyanobacteria bacterium Yellowstone B-Prime).